A 643-amino-acid polypeptide reads, in one-letter code: DNA gyrase subunit B (643 aa).

Residues 428-542 (SEIFLVEGDS…AGYVYIAQPP (115 aa)) form the Toprim domain. Residues E434, D507, and D509 each coordinate Mg(2+).

Belongs to the type II topoisomerase GyrB family. As to quaternary structure, heterotetramer, composed of two GyrA and two GyrB chains. In the heterotetramer, GyrA contains the active site tyrosine that forms a transient covalent intermediate with DNA, while GyrB binds cofactors and catalyzes ATP hydrolysis. The cofactor is Mg(2+). Mn(2+) is required as a cofactor. Requires Ca(2+) as cofactor.

Its subcellular location is the cytoplasm. It catalyses the reaction ATP-dependent breakage, passage and rejoining of double-stranded DNA.. In terms of biological role, a type II topoisomerase that negatively supercoils closed circular double-stranded (ds) DNA in an ATP-dependent manner to modulate DNA topology and maintain chromosomes in an underwound state. Negative supercoiling favors strand separation, and DNA replication, transcription, recombination and repair, all of which involve strand separation. Also able to catalyze the interconversion of other topological isomers of dsDNA rings, including catenanes and knotted rings. Type II topoisomerases break and join 2 DNA strands simultaneously in an ATP-dependent manner. The polypeptide is DNA gyrase subunit B (Staphylococcus epidermidis (strain ATCC 35984 / DSM 28319 / BCRC 17069 / CCUG 31568 / BM 3577 / RP62A)).